We begin with the raw amino-acid sequence, 381 residues long: L-lactate dehydrogenase (381 aa).

An FMN hydroxy acid dehydrogenase domain is found at 1–380 (MIISASTDYR…TRDSLVRELG (380 aa)). Tyrosine 24 lines the substrate pocket. Positions 106 and 127 each coordinate FMN. Tyrosine 129 is a binding site for substrate. Threonine 155 lines the FMN pocket. Substrate is bound at residue arginine 164. FMN is bound at residue lysine 251. The active-site Proton acceptor is histidine 275. Arginine 278 is a substrate binding site. FMN is bound at residue 306–330 (DSGIRSGLDVVRMIALGADTVLIGR).

Belongs to the FMN-dependent alpha-hydroxy acid dehydrogenase family. In terms of assembly, homotetramer. FMN is required as a cofactor.

It is found in the cell inner membrane. It carries out the reaction (S)-lactate + A = pyruvate + AH2. Functionally, catalyzes the conversion of L-lactate to pyruvate. Is coupled to the respiratory chain. The chain is L-lactate dehydrogenase from Pseudomonas putida (strain ATCC 700007 / DSM 6899 / JCM 31910 / BCRC 17059 / LMG 24140 / F1).